Here is a 172-residue protein sequence, read N- to C-terminus: Adenine phosphoribosyltransferase (172 aa).

The protein belongs to the purine/pyrimidine phosphoribosyltransferase family. In terms of assembly, homodimer.

The protein localises to the cytoplasm. The catalysed reaction is AMP + diphosphate = 5-phospho-alpha-D-ribose 1-diphosphate + adenine. The protein operates within purine metabolism; AMP biosynthesis via salvage pathway; AMP from adenine: step 1/1. Catalyzes a salvage reaction resulting in the formation of AMP, that is energically less costly than de novo synthesis. This chain is Adenine phosphoribosyltransferase, found in Methanococcus maripaludis (strain C7 / ATCC BAA-1331).